We begin with the raw amino-acid sequence, 122 residues long: Large ribosomal subunit protein uL14 (122 aa).

This sequence belongs to the universal ribosomal protein uL14 family. Part of the 50S ribosomal subunit. Forms a cluster with proteins L3 and L19. In the 70S ribosome, L14 and L19 interact and together make contacts with the 16S rRNA in bridges B5 and B8.

Its function is as follows. Binds to 23S rRNA. Forms part of two intersubunit bridges in the 70S ribosome. The protein is Large ribosomal subunit protein uL14 of Chlamydia trachomatis serovar A (strain ATCC VR-571B / DSM 19440 / HAR-13).